The sequence spans 436 residues: YRLTYYTPDYQVAETDILAAFRMTPQPGVPAEECGAAVAAESSTGTWTTVWTDGLTQLDKYKGRCYDLEPVPGENNQYIAYVAYPIDLFEEGSVTNLLTSIVGNVFGFKALRALRLEDLRIPPAYVKTFWGPPHGIQVERDKLNKYGRPLLGCTIKPKLGLSAKNYGRAVYECLRGGLDFTKDDENVNSQSFMRWRDRFLFCAEAIYKAQSETGEIKGHYLNATAGTCEEMYKRANYAAQIGVPIVMHDYLTGGFTANTSLAMFCRDNGLLLHIHRAMHAVIDRQRNHGIHFRVLAKTLRMSGGDHLHSGTVVGKLEGEREVTLGFVDLMRDPYVEKDRSRGIYFTQDWVGLGGTIPVASGGIHVWHMPALTEIFGDDACLQFGGGTLGHPWGNAPGAAANRVASEACVQARNEGRDLSREGGDVIREACKWSPEL.

Substrate-binding residues include N104 and T154. K156 serves as the catalytic Proton acceptor. K158 contributes to the substrate binding site. 3 residues coordinate Mg(2+): K182, D184, and E185. Position 182 is an N6-carboxylysine (K182). The Proton acceptor role is filled by H275. R276, H308, and S360 together coordinate substrate.

The protein belongs to the RuBisCO large chain family. Type I subfamily. Heterohexadecamer of 8 large chains and 8 small chains; disulfide-linked. The disulfide link is formed within the large subunit homodimers. The cofactor is Mg(2+). The disulfide bond which can form in the large chain dimeric partners within the hexadecamer appears to be associated with oxidative stress and protein turnover.

The protein resides in the plastid. The protein localises to the chloroplast. The enzyme catalyses 2 (2R)-3-phosphoglycerate + 2 H(+) = D-ribulose 1,5-bisphosphate + CO2 + H2O. It catalyses the reaction D-ribulose 1,5-bisphosphate + O2 = 2-phosphoglycolate + (2R)-3-phosphoglycerate + 2 H(+). RuBisCO catalyzes two reactions: the carboxylation of D-ribulose 1,5-bisphosphate, the primary event in carbon dioxide fixation, as well as the oxidative fragmentation of the pentose substrate in the photorespiration process. Both reactions occur simultaneously and in competition at the same active site. The chain is Ribulose bisphosphate carboxylase large chain from Euglena anabaena (Euglenaria anabaena).